Consider the following 83-residue polypeptide: Apolipoprotein C-I, acidic form (83 aa).

A signal peptide spans M1–G26.

It belongs to the apolipoprotein C1 family.

The protein localises to the secreted. This chain is Apolipoprotein C-I, acidic form (APOC1A), found in Pan paniscus (Pygmy chimpanzee).